The chain runs to 438 residues: Probable glycine dehydrogenase (decarboxylating) subunit 1 (438 aa).

It belongs to the GcvP family. N-terminal subunit subfamily. As to quaternary structure, the glycine cleavage system is composed of four proteins: P, T, L and H. In this organism, the P 'protein' is a heterodimer of two subunits.

It carries out the reaction N(6)-[(R)-lipoyl]-L-lysyl-[glycine-cleavage complex H protein] + glycine + H(+) = N(6)-[(R)-S(8)-aminomethyldihydrolipoyl]-L-lysyl-[glycine-cleavage complex H protein] + CO2. Functionally, the glycine cleavage system catalyzes the degradation of glycine. The P protein binds the alpha-amino group of glycine through its pyridoxal phosphate cofactor; CO(2) is released and the remaining methylamine moiety is then transferred to the lipoamide cofactor of the H protein. The polypeptide is Probable glycine dehydrogenase (decarboxylating) subunit 1 (Syntrophomonas wolfei subsp. wolfei (strain DSM 2245B / Goettingen)).